Consider the following 191-residue polypeptide: Threonylcarbamoyl-AMP synthase (191 aa).

The YrdC-like domain occupies 10–191 (VPKLTQCVRT…DLYTDAIIRA (182 aa)).

This sequence belongs to the SUA5 family. TsaC subfamily.

It localises to the cytoplasm. The catalysed reaction is L-threonine + hydrogencarbonate + ATP = L-threonylcarbamoyladenylate + diphosphate + H2O. In terms of biological role, required for the formation of a threonylcarbamoyl group on adenosine at position 37 (t(6)A37) in tRNAs that read codons beginning with adenine. Catalyzes the conversion of L-threonine, HCO(3)(-)/CO(2) and ATP to give threonylcarbamoyl-AMP (TC-AMP) as the acyladenylate intermediate, with the release of diphosphate. The protein is Threonylcarbamoyl-AMP synthase of Saccharophagus degradans (strain 2-40 / ATCC 43961 / DSM 17024).